The following is a 984-amino-acid chain: Putative formate dehydrogenase SH0748 (984 aa).

The region spanning 3 to 79 is the 2Fe-2S ferredoxin-type domain; the sequence is EHLIVTLDGT…PMTVNTQNND (77 aa). [2Fe-2S] cluster-binding residues include cysteine 37, cysteine 48, cysteine 51, and cysteine 63. A 4Fe-4S His(Cys)3-ligated-type domain is found at 79 to 119; the sequence is DVKASQKEALDRILEKHMLYCTVCDYNNGDCEIHNAMDAWG. Histidine 95, cysteine 99, cysteine 102, cysteine 109, cysteine 147, cysteine 150, cysteine 153, cysteine 157, cysteine 190, cysteine 193, cysteine 196, cysteine 200, cysteine 264, cysteine 267, cysteine 271, and cysteine 299 together coordinate [4Fe-4S] cluster. 4Fe-4S ferredoxin-type domains follow at residues 138 to 165 and 181 to 211; these read PFYRYDPDQCILCGRCVEACQDIEVNET and NDVPINESSCVSCGQCATVCPCNAMMEVNME. The segment at 252 to 984 is formate dehydrogenase; sequence MRKERIKKTK…YVFPGNVVDK (733 aa). The 4Fe-4S Mo/W bis-MGD-type domain occupies 257 to 313; that stretch reads IKKTKTVCTYCGVGCSFDVWTKDREVLKVQPSHDSPANKIATCVKGKFSWGHINSDQ.

In the C-terminal section; belongs to the prokaryotic molybdopterin-containing oxidoreductase family. The cofactor is [2Fe-2S] cluster. [4Fe-4S] cluster serves as cofactor. It depends on Mo-bis(molybdopterin guanine dinucleotide) as a cofactor.

The enzyme catalyses formate + NAD(+) = CO2 + NADH. This chain is Putative formate dehydrogenase SH0748, found in Staphylococcus haemolyticus (strain JCSC1435).